The following is a 247-amino-acid chain: UPF0259 membrane protein BU276 (247 aa).

6 helical membrane-spanning segments follow: residues 20–40, 85–105, 114–134, 137–157, 188–208, and 218–238; these read IGAI…IDMF, IMES…LISV, IVSS…LNFL, FIIQ…SIIL, IIGP…MLLA, and LFLI…IYLF.

The protein belongs to the UPF0259 family.

It localises to the cell membrane. In Buchnera aphidicola subsp. Acyrthosiphon pisum (strain APS) (Acyrthosiphon pisum symbiotic bacterium), this protein is UPF0259 membrane protein BU276.